Reading from the N-terminus, the 860-residue chain is Leucine--tRNA ligase (860 aa).

Residues 42-52 (PYPSGRLHMGH) carry the 'HIGH' region motif. The 'KMSKS' region motif lies at 619 to 623 (KMSKS). Lysine 622 serves as a coordination point for ATP.

Belongs to the class-I aminoacyl-tRNA synthetase family.

The protein localises to the cytoplasm. It catalyses the reaction tRNA(Leu) + L-leucine + ATP = L-leucyl-tRNA(Leu) + AMP + diphosphate. In Escherichia coli (strain ATCC 8739 / DSM 1576 / NBRC 3972 / NCIMB 8545 / WDCM 00012 / Crooks), this protein is Leucine--tRNA ligase.